We begin with the raw amino-acid sequence, 397 residues long: S-adenosylmethionine synthase (397 aa).

H15 contributes to the ATP binding site. D17 is a Mg(2+) binding site. E43 contacts K(+). L-methionine-binding residues include E56 and Q99. A flexible loop region spans residues 99–109 (QSPDIAMGVNK). ATP-binding positions include 175-177 (DGK), 241-242 (RF), D250, 256-257 (RK), A273, and K277. An L-methionine-binding site is contributed by D250. Residue K281 participates in L-methionine binding.

The protein belongs to the AdoMet synthase family. As to quaternary structure, homotetramer; dimer of dimers. Requires Mg(2+) as cofactor. It depends on K(+) as a cofactor.

It localises to the cytoplasm. The catalysed reaction is L-methionine + ATP + H2O = S-adenosyl-L-methionine + phosphate + diphosphate. It participates in amino-acid biosynthesis; S-adenosyl-L-methionine biosynthesis; S-adenosyl-L-methionine from L-methionine: step 1/1. Catalyzes the formation of S-adenosylmethionine (AdoMet) from methionine and ATP. The overall synthetic reaction is composed of two sequential steps, AdoMet formation and the subsequent tripolyphosphate hydrolysis which occurs prior to release of AdoMet from the enzyme. The protein is S-adenosylmethionine synthase of Acetivibrio thermocellus (strain ATCC 27405 / DSM 1237 / JCM 9322 / NBRC 103400 / NCIMB 10682 / NRRL B-4536 / VPI 7372) (Clostridium thermocellum).